The primary structure comprises 154 residues: Myoglobin (154 aa).

Residues 2 to 148 form the Globin domain; the sequence is GLSDGEWQLV…FRKDMASNYK (147 aa). Residue S4 is modified to Phosphoserine. H65 serves as a coordination point for nitrite. H65 is an O2 binding site. T68 carries the post-translational modification Phosphothreonine. H94 is a heme b binding site.

The protein belongs to the globin family. Monomeric.

Its subcellular location is the cytoplasm. The protein resides in the sarcoplasm. It catalyses the reaction Fe(III)-heme b-[protein] + nitric oxide + H2O = Fe(II)-heme b-[protein] + nitrite + 2 H(+). The enzyme catalyses H2O2 + AH2 = A + 2 H2O. Its function is as follows. Monomeric heme protein which primary function is to store oxygen and facilitate its diffusion within muscle tissues. Reversibly binds oxygen through a pentacoordinated heme iron and enables its timely and efficient release as needed during periods of heightened demand. Depending on the oxidative conditions of tissues and cells, and in addition to its ability to bind oxygen, it also has a nitrite reductase activity whereby it regulates the production of bioactive nitric oxide. Under stress conditions, like hypoxia and anoxia, it also protects cells against reactive oxygen species thanks to its pseudoperoxidase activity. The chain is Myoglobin (MB) from Hylobates agilis (Agile gibbon).